A 351-amino-acid chain; its full sequence is Probable protein phosphatase 2C 41 (351 aa).

The PPM-type phosphatase domain occupies 62–348 (FTSICSNRGE…DDISVLCLFF (287 aa)). Aspartate 98, glycine 99, aspartate 293, and aspartate 339 together coordinate Mn(2+).

The protein belongs to the PP2C family. It depends on Mg(2+) as a cofactor. The cofactor is Mn(2+).

The enzyme catalyses O-phospho-L-seryl-[protein] + H2O = L-seryl-[protein] + phosphate. The catalysed reaction is O-phospho-L-threonyl-[protein] + H2O = L-threonyl-[protein] + phosphate. The polypeptide is Probable protein phosphatase 2C 41 (Arabidopsis thaliana (Mouse-ear cress)).